We begin with the raw amino-acid sequence, 250 residues long: Triosephosphate isomerase (250 aa).

Residue 9–11 (NWK) participates in substrate binding. Residue His-96 is the Electrophile of the active site. Glu-168 (proton acceptor) is an active-site residue. Substrate-binding positions include Gly-174, Ser-216, and 237–238 (GG).

Belongs to the triosephosphate isomerase family. As to quaternary structure, homodimer.

It localises to the cytoplasm. It catalyses the reaction D-glyceraldehyde 3-phosphate = dihydroxyacetone phosphate. It functions in the pathway carbohydrate biosynthesis; gluconeogenesis. Its pathway is carbohydrate degradation; glycolysis; D-glyceraldehyde 3-phosphate from glycerone phosphate: step 1/1. Its function is as follows. Involved in the gluconeogenesis. Catalyzes stereospecifically the conversion of dihydroxyacetone phosphate (DHAP) to D-glyceraldehyde-3-phosphate (G3P). The polypeptide is Triosephosphate isomerase (Leptospira interrogans serogroup Icterohaemorrhagiae serovar Lai (strain 56601)).